We begin with the raw amino-acid sequence, 555 residues long: Formate--tetrahydrofolate ligase (555 aa).

Residue 64-71 (TKAGIGKT) participates in ATP binding.

This sequence belongs to the formate--tetrahydrofolate ligase family.

The enzyme catalyses (6S)-5,6,7,8-tetrahydrofolate + formate + ATP = (6R)-10-formyltetrahydrofolate + ADP + phosphate. It functions in the pathway one-carbon metabolism; tetrahydrofolate interconversion. This chain is Formate--tetrahydrofolate ligase, found in Parabacteroides distasonis (strain ATCC 8503 / DSM 20701 / CIP 104284 / JCM 5825 / NCTC 11152).